Reading from the N-terminus, the 542-residue chain is DNA-binding protein modulo (542 aa).

The interval methionine 1–lysine 166 is disordered. A phosphoserine mark is found at serine 42 and serine 44. The span at serine 59–proline 114 shows a compositional bias: acidic residues. A phosphoserine mark is found at serine 120, serine 129, and serine 142. Positions alanine 123–alanine 135 are enriched in acidic residues. Residues proline 136–glycine 158 show a composition bias toward basic and acidic residues. 4 consecutive RRM domains span residues glutamine 175–asparagine 251, arginine 258–glutamine 331, leucine 340–serine 429, and arginine 420–leucine 489. The residue at position 304 (serine 304) is a Phosphoserine. Serine 330 carries the phosphoserine; by PKA modification. Residue serine 443 is modified to Phosphoserine. The interval arginine 505–phenylalanine 542 is disordered.

In terms of processing, the N-terminus is blocked.

Its subcellular location is the nucleus. Functionally, its capacity to bind DNA and protein(s), and its differential expression during development suggest a role in the regulation of gene expression during Drosophila development. It could, in interaction with other factors, be required for the translation of instructions provided by pattern forming genes and controls, via chromatin changes, the activity of genes critical for the process of morphogenesis of several embryonic territories. The protein is DNA-binding protein modulo (mod) of Drosophila melanogaster (Fruit fly).